The chain runs to 195 residues: MPPMKDSSNSTPRTDEELQEVTVGELKPHNASITLLEYDPRWPKLFDREAKRIRSVLGNKALQVEHVGSTSVPGLCAKPIIDILLVVTDSADETTYVPDLEKVGYTLRIREPDWFEHRVFKGPDTDINLHVFSKGTSEIDRMLRFRDWLRANNSDRDNYARVKRKLAQHEWRQVQHYADAKSSIVQEIMKRANAT.

A compositionally biased stretch (polar residues) spans 1–12 (MPPMKDSSNSTP). A disordered region spans residues 1–21 (MPPMKDSSNSTPRTDEELQEV).

This sequence belongs to the UPF0157 (GrpB) family.

The protein is UPF0157 protein BH1888 of Halalkalibacterium halodurans (strain ATCC BAA-125 / DSM 18197 / FERM 7344 / JCM 9153 / C-125) (Bacillus halodurans).